The chain runs to 122 residues: Large ribosomal subunit protein uL18 (122 aa).

Belongs to the universal ribosomal protein uL18 family. As to quaternary structure, part of the 50S ribosomal subunit; part of the 5S rRNA/L5/L18/L25 subcomplex. Contacts the 5S and 23S rRNAs.

This is one of the proteins that bind and probably mediate the attachment of the 5S RNA into the large ribosomal subunit, where it forms part of the central protuberance. This is Large ribosomal subunit protein uL18 from Synechococcus sp. (strain JA-2-3B'a(2-13)) (Cyanobacteria bacterium Yellowstone B-Prime).